The sequence spans 491 residues: Cyclin-A1-3 (491 aa).

The segment covering 1–21 (MSSSLASRRSSSSSAAKRPAA) has biased composition (low complexity). Disordered stretches follow at residues 1–32 (MSSS…AAGA) and 69–106 (SLAS…QKES). Over residues 75–91 (NVGTNRVSAVKSASTKP) the composition is skewed to polar residues.

This sequence belongs to the cyclin family. Cyclin AB subfamily.

This is Cyclin-A1-3 (CYCA1-3) from Oryza sativa subsp. japonica (Rice).